The sequence spans 253 residues: uncharacterized protein (253 aa).

NADP(+) is bound at residue 10-35; it reads ISGAASKRGIGRATAELFASHGARVA. Residue Ser-144 participates in substrate binding. Tyr-159 acts as the Proton acceptor in catalysis.

Belongs to the short-chain dehydrogenases/reductases (SDR) family.

This is an uncharacterized protein from Sinorhizobium fredii (strain NBRC 101917 / NGR234).